Reading from the N-terminus, the 689-residue chain is Bifunctional protein GAL10 (689 aa).

Residues 1 to 345 (MSYILVTGGA…TTKNPFGFQI (345 aa)) are galactowaldenase. 3-34 (YILVTGGAGYIGSHTVVELVNNGYNVVVVDNL) provides a ligand contact to NAD(+). The segment at 346-689 (NNYSWTKFDS…SYTIYRFENF (344 aa)) is mutarotase. His-534 serves as the catalytic For mutarotase activity.

The protein in the N-terminal section; belongs to the NAD(P)-dependent epimerase/dehydratase family. This sequence in the C-terminal section; belongs to the aldose epimerase family. Requires NAD(+) as cofactor.

It catalyses the reaction UDP-alpha-D-glucose = UDP-alpha-D-galactose. The catalysed reaction is alpha-D-glucose = beta-D-glucose. It participates in carbohydrate metabolism; galactose metabolism. The protein operates within carbohydrate metabolism; hexose metabolism. Functionally, mutarotase converts alpha-aldose to the beta-anomer. It is active on D-glucose, L-arabinose, D-xylose, D-galactose, maltose and lactose. The sequence is that of Bifunctional protein GAL10 (GAL10) from Pachysolen tannophilus (Yeast).